A 356-amino-acid polypeptide reads, in one-letter code: MLFKKIDDINPLILLIDSCQYTNQIMNSYRHRNQTTSFIRKETIDCNIQLPRKIESDLLLSLSSNTDDYIPIINSLSNEDHINILKYTIVIDNVNYLEKILNCTSIDLSVNDDILLCTAIINCSSECLLYLLDKGIPIDFCDNYAIRACCIRLEKYIYTTRKNKSSCDMLKIVIDRGGNVNTHNYEPLYSAVNDNNFDKIKLLVENGANKLSDFKRKITNTNLEIFQYLIDNRVELEVNFDDIFLQSIINDDSECMKLFIELGANINSIPTLELTKIIINARHEILEILINYGLDINNINDKINNEINDNRCEDYDETIKTVELVSNAGIDIINLLKVVIQNALSVYNFTYPKYSI.

ANK repeat units lie at residues 111–143 (NDDI…FCDN), 152–182 (RLEK…NVNT), 183–213 (HNYE…KLSD), 215–238 (KRKI…ELEV), 239–266 (NFDD…GANI), and 267–298 (NSIP…DINN).

In Acanthamoeba polyphaga (Amoeba), this protein is Putative ankyrin repeat protein R599.